The primary structure comprises 143 residues: Hemoglobin subunit alpha-A (143 aa).

Positions 2-143 constitute a Globin domain; sequence SLSGKDKSVV…LALALAERYR (142 aa). O2 is bound at residue His60. Residue His89 coordinates heme b.

Belongs to the globin family. In terms of assembly, heterotetramer of two alpha chains and two beta chains. In terms of tissue distribution, red blood cells.

In terms of biological role, involved in oxygen transport from gills to the various peripheral tissues. In Seriola quinqueradiata (Five-ray yellowtail), this protein is Hemoglobin subunit alpha-A (hbaa).